The following is a 788-amino-acid chain: Protein TRS1 (788 aa).

Disordered regions lie at residues 1-82 (MAQR…NFWH) and 610-663 (IHKK…PSRV). Gly residues predominate over residues 16 to 25 (RGRGAGGPSG). The segment covering 26–56 (VGSSPPSSCVPMGATSTAGTGASAAPTATPG) has biased composition (low complexity). Residues 74–248 (SGNNSNFWHG…HGAGEVVRLY (175 aa)) form an RNA-binding region. The span at 651-660 (LRRDDEDWKP) shows a compositional bias: basic and acidic residues. The interval 672 to 788 (LDETFWVLGS…NVATHYHYNA (117 aa)) is interaction with host EIF2AK2/PKR.

Belongs to the herpesviridae US22 family. In terms of assembly, interacts with host EIF2AK2/PKR; this interaction retains EIF2AK2 to the host nucleus and prevents its activation. Interaction (via N-terminus) with host BECN1; this interaction inhibits host autophagy. Interacts with the viral DNA polymerase accessory subunit UL44. Interacts with host HSPA5.

Its subcellular location is the virion. The protein localises to the host cytoplasm. The protein resides in the host nucleus. Inhibits the establishment of the antiviral state in the infected cell. Prevents the phosphorylation of the host eukaryotic translation initiation factor eIF-2alpha/EIF2S1 and thus the shutoff of viral and cellular protein synthesis by directly interacting with EIF2AK2/PKR. Prevents stress granule formation in response to eIF-2alpha/EIF2S1 phosphorylation, thereby rescuing viral replication and protein synthesis. Also inhibits host autophagy by interacting with host Beclin-1/BECN1. The polypeptide is Protein TRS1 (TRS1) (Human cytomegalovirus (strain Merlin) (HHV-5)).